The following is a 434-amino-acid chain: Methylenetetrahydrofolate--tRNA-(uracil-5-)-methyltransferase TrmFO (434 aa).

10–15 (GAGLAG) is an FAD binding site.

The protein belongs to the MnmG family. TrmFO subfamily. FAD serves as cofactor.

The protein localises to the cytoplasm. The catalysed reaction is uridine(54) in tRNA + (6R)-5,10-methylene-5,6,7,8-tetrahydrofolate + NADH + H(+) = 5-methyluridine(54) in tRNA + (6S)-5,6,7,8-tetrahydrofolate + NAD(+). The enzyme catalyses uridine(54) in tRNA + (6R)-5,10-methylene-5,6,7,8-tetrahydrofolate + NADPH + H(+) = 5-methyluridine(54) in tRNA + (6S)-5,6,7,8-tetrahydrofolate + NADP(+). Catalyzes the folate-dependent formation of 5-methyl-uridine at position 54 (M-5-U54) in all tRNAs. This Bacillus cereus (strain AH820) protein is Methylenetetrahydrofolate--tRNA-(uracil-5-)-methyltransferase TrmFO.